The following is a 424-amino-acid chain: Inhibin beta A chain (424 aa).

An N-terminal signal peptide occupies residues 1 to 20 (MPLLWLRGFLLASCWIIVRS). The propeptide occupies 21–308 (SPTPGSEGPG…EDHPHRRRRR (288 aa)). N-linked (GlcNAc...) asparagine glycosylation occurs at Asn-165. The segment at 257-288 (KKKKKEEEGEGKKKDGGDGGAGADEDKEQSHR) is disordered. A compositionally biased stretch (basic and acidic residues) spans 261–273 (KEEEGEGKKKDGG). 4 cysteine pairs are disulfide-bonded: Cys-312–Cys-320, Cys-319–Cys-389, Cys-348–Cys-421, and Cys-352–Cys-423.

Belongs to the TGF-beta family. Dimeric, linked by one or more disulfide bonds. Inhibin A is a dimer of alpha/INHA and beta-A/INHBA. Activin A is a homodimer of beta-A/INHBA. Activin AB is a dimer of beta-A/INHBA and beta-B/INHBB. Interacts with FST and FSTL3; these interactions prevent activin A interaction to its type II receptor. Activin A interacts with ACVR2A. Activin A interacts with BMPR2. Inhibin A interacts with ACVR1; this interaction creates a non-signaling complex (NSC) that inhibits ACVR1-mediated BMP signaling. Inhibin A interacts with ACVR2A.

It is found in the secreted. Its function is as follows. Inhibins/activins are involved in regulating a number of diverse functions such as hypothalamic and pituitary hormone secretion, gonadal hormone secretion, germ cell development and maturation, erythroid differentiation, insulin secretion, nerve cell survival, embryonic axial development or bone growth, depending on their subunit composition. In terms of biological role, activin A is a homodimer of INHBA that plays a role in several essential biological processes including embryonic development, stem cell maintenance and differentiation, haematopoiesis, cell proliferation and tissue fibrosis. Signals through type I (such as ACVR1B or ACVR1C) and type II receptors (such as ACVR2A, ACVR2B or BMPR2) which, upon ligand binding, phosphorylate SMAD2 and SMAD3 intracellular signaling mediators that form a complex with SMAD4, translocate to the nucleus and modulate gene expression. Can also activate alternative non-canonical intracellular signaling pathways including the p38 MAPK, extracellular signal-regulated kinases 1/2 (ERK1/2) and c-Jun N-terminal kinases (JNKs) to modulate cell migration and differentiation. Alternatively, promotes osteoblastic differentiation via ACVRL1-SMAD1/5/9 pathway. In addition, can engage the type I receptor ACVR1 to form an ACVR1-activin A-type II receptor non-signaling complex (NSC) that renders receptors unavailable for engagement with BMPs, hence resulting in an apparent inhibition of ACVR1-mediated BMP signaling. Inhibin A is a dimer of alpha/INHA and beta-A/INHBA that functions as a feedback regulator in the hypothalamic-pituitary-gonadal (HPG) axis. Inhibits the secretion of FSH from the anterior pituitary gland by acting on pituitary gonadotrope cells. Antagonizes activin A by binding to the proteoglycan, betaglycan, and forming a stable complex with and, thereby, sequestering type II activin receptors while excluding type I receptor. The polypeptide is Inhibin beta A chain (INHBA) (Felis catus (Cat)).